We begin with the raw amino-acid sequence, 249 residues long: 2,3-bisphosphoglycerate-dependent phosphoglycerate mutase (249 aa).

Residues 8 to 15, 21 to 22, arginine 60, 87 to 90, lysine 98, 114 to 115, and 183 to 184 contribute to the substrate site; these read RHGQSAWN, TG, ERHY, RR, and GN. The Tele-phosphohistidine intermediate role is filled by histidine 9. Residue glutamate 87 is the Proton donor/acceptor of the active site. Residues 115–137 form a disordered region; sequence RSYDTPPPPLPADDPRSPAGDAR.

Belongs to the phosphoglycerate mutase family. BPG-dependent PGAM subfamily. As to quaternary structure, homodimer.

The enzyme catalyses (2R)-2-phosphoglycerate = (2R)-3-phosphoglycerate. It participates in carbohydrate degradation; glycolysis; pyruvate from D-glyceraldehyde 3-phosphate: step 3/5. Its function is as follows. Catalyzes the interconversion of 2-phosphoglycerate and 3-phosphoglycerate. This Nitratidesulfovibrio vulgaris (strain DSM 19637 / Miyazaki F) (Desulfovibrio vulgaris) protein is 2,3-bisphosphoglycerate-dependent phosphoglycerate mutase.